The sequence spans 137 residues: MRILGLDLGKKTIGVAVSDPLGFTAQGITTIRRANKEKDMEELRKICDEYKVETIVIGLPKNMNGTIGPSGEIAMEMGKLVEEALNIKVEFWDERLTTVAAHKAMLEADLSRSKRKKIVDKVASTYILQGYLDRISK.

Belongs to the YqgF nuclease family.

It is found in the cytoplasm. In terms of biological role, could be a nuclease involved in processing of the 5'-end of pre-16S rRNA. This chain is Putative pre-16S rRNA nuclease, found in Clostridium botulinum (strain Eklund 17B / Type B).